The sequence spans 228 residues: Ribonuclease HII (228 aa).

The 210-residue stretch at 1-210 folds into the RNase H type-2 domain; it reads MKIAGIDEAG…LKKIAEKVES (210 aa). Aspartate 7, glutamate 8, and aspartate 105 together coordinate a divalent metal cation.

Belongs to the RNase HII family. In terms of assembly, monomer. It depends on Mn(2+) as a cofactor. Requires Mg(2+) as cofactor.

It is found in the cytoplasm. The catalysed reaction is Endonucleolytic cleavage to 5'-phosphomonoester.. Its function is as follows. Endonuclease that specifically degrades the RNA of RNA-DNA hybrids. The chain is Ribonuclease HII (rnhB) from Thermococcus kodakarensis (strain ATCC BAA-918 / JCM 12380 / KOD1) (Pyrococcus kodakaraensis (strain KOD1)).